We begin with the raw amino-acid sequence, 263 residues long: Small ribosomal subunit protein eS4 (263 aa).

Residues 42-105 (LPLIIFLRNR…GENFRLIYDV (64 aa)) form the S4 RNA-binding domain.

This sequence belongs to the eukaryotic ribosomal protein eS4 family. Component of the small ribosomal subunit. Part of the small subunit (SSU) processome, composed of more than 70 proteins and the RNA chaperone small nucleolar RNA (snoRNA) U3.

It is found in the cytoplasm. The protein localises to the nucleus. It localises to the nucleolus. Functionally, component of the small ribosomal subunit. The ribosome is a large ribonucleoprotein complex responsible for the synthesis of proteins in the cell. Part of the small subunit (SSU) processome, first precursor of the small eukaryotic ribosomal subunit. During the assembly of the SSU processome in the nucleolus, many ribosome biogenesis factors, an RNA chaperone and ribosomal proteins associate with the nascent pre-rRNA and work in concert to generate RNA folding, modifications, rearrangements and cleavage as well as targeted degradation of pre-ribosomal RNA by the RNA exosome. In Danio rerio (Zebrafish), this protein is Small ribosomal subunit protein eS4 (rps4x).